The following is a 75-amino-acid chain: uncharacterized protein (75 aa).

The LysM domain occupies 29 to 72 (EVYHVESGDTLWTIAKSFEIPVQQLMNLNKLSSDRIYPGQIIKI).

This is an uncharacterized protein from Bacillus subtilis (strain 168).